Reading from the N-terminus, the 260-residue chain is Thiazole synthase (260 aa).

Residue Lys-101 is the Schiff-base intermediate with DXP of the active site. 1-deoxy-D-xylulose 5-phosphate contacts are provided by residues Gly-162, 188–189 (AG), and 210–211 (NT).

Belongs to the ThiG family. In terms of assembly, homotetramer. Forms heterodimers with either ThiH or ThiS.

Its subcellular location is the cytoplasm. It carries out the reaction [ThiS sulfur-carrier protein]-C-terminal-Gly-aminoethanethioate + 2-iminoacetate + 1-deoxy-D-xylulose 5-phosphate = [ThiS sulfur-carrier protein]-C-terminal Gly-Gly + 2-[(2R,5Z)-2-carboxy-4-methylthiazol-5(2H)-ylidene]ethyl phosphate + 2 H2O + H(+). The protein operates within cofactor biosynthesis; thiamine diphosphate biosynthesis. Its function is as follows. Catalyzes the rearrangement of 1-deoxy-D-xylulose 5-phosphate (DXP) to produce the thiazole phosphate moiety of thiamine. Sulfur is provided by the thiocarboxylate moiety of the carrier protein ThiS. In vitro, sulfur can be provided by H(2)S. This chain is Thiazole synthase, found in Acidithiobacillus ferrooxidans (strain ATCC 23270 / DSM 14882 / CIP 104768 / NCIMB 8455) (Ferrobacillus ferrooxidans (strain ATCC 23270)).